A 91-amino-acid polypeptide reads, in one-letter code: N(2)-fixation sustaining protein CowN (91 aa).

Belongs to the CowN family.

In terms of biological role, is required to sustain N(2)-dependent growth in the presence of low levels of carbon monoxide (CO). Probably acts by protecting the N(2) fixation ability of the nitrogenase complex, which is inactivated in the presence of CO. This Beijerinckia indica subsp. indica (strain ATCC 9039 / DSM 1715 / NCIMB 8712) protein is N(2)-fixation sustaining protein CowN.